Consider the following 377-residue polypeptide: Succinyl-diaminopimelate desuccinylase (377 aa).

Histidine 66 contributes to the Zn(2+) binding site. Aspartate 68 is a catalytic residue. Residue aspartate 99 coordinates Zn(2+). The active-site Proton acceptor is glutamate 133. Positions 134, 162, and 348 each coordinate Zn(2+).

Belongs to the peptidase M20A family. DapE subfamily. Homodimer. It depends on Zn(2+) as a cofactor. Co(2+) is required as a cofactor.

It carries out the reaction N-succinyl-(2S,6S)-2,6-diaminopimelate + H2O = (2S,6S)-2,6-diaminopimelate + succinate. Its pathway is amino-acid biosynthesis; L-lysine biosynthesis via DAP pathway; LL-2,6-diaminopimelate from (S)-tetrahydrodipicolinate (succinylase route): step 3/3. In terms of biological role, catalyzes the hydrolysis of N-succinyl-L,L-diaminopimelic acid (SDAP), forming succinate and LL-2,6-diaminopimelate (DAP), an intermediate involved in the bacterial biosynthesis of lysine and meso-diaminopimelic acid, an essential component of bacterial cell walls. The chain is Succinyl-diaminopimelate desuccinylase from Xylella fastidiosa (strain 9a5c).